We begin with the raw amino-acid sequence, 676 residues long: ATP-dependent RNA helicase dbp-9 (676 aa).

The interval 1 to 97 (MAKRKLNETD…SEKDDADLTF (97 aa)) is disordered. Residues 70-90 (QQLKDEQKQQDEKDEKKQSEK) are compositionally biased toward basic and acidic residues. The short motif at 95–123 (LTFSDLGLDPRLVQAVAKQSFEKPTLVQR) is the Q motif element. In terms of domain architecture, Helicase ATP-binding spans 126-304 (IPLALAGQDV…KGFFCRNPTM (179 aa)). Residue 139 to 146 (AKTGSGKT) coordinates ATP. The DEAD box motif lies at 251–254 (DEAD). In terms of domain architecture, Helicase C-terminal spans 317–541 (KLTQFYVKCG…PYNFNKDQME (225 aa)). Basic and acidic residues predominate over residues 410–432 (EDEKTEEKKEEQGEKKEGDEKKN). Disordered stretches follow at residues 410–444 (EDEK…RRDQ) and 633–676 (FKKQ…RVRK). The segment covering 642 to 663 (TRGKKGAKGGKGGHGKYKKGPG) has biased composition (basic residues).

The protein belongs to the DEAD box helicase family. DDX56/DBP9 subfamily.

It localises to the nucleus. The protein resides in the nucleolus. It carries out the reaction ATP + H2O = ADP + phosphate + H(+). Its function is as follows. ATP-binding RNA helicase involved in the biogenesis of 60S ribosomal subunits and is required for the normal formation of 25S and 5.8S rRNAs. The polypeptide is ATP-dependent RNA helicase dbp-9 (dbp-9) (Neurospora crassa (strain ATCC 24698 / 74-OR23-1A / CBS 708.71 / DSM 1257 / FGSC 987)).